Reading from the N-terminus, the 532-residue chain is 2,3-bisphosphoglycerate-independent phosphoglycerate mutase (532 aa).

Positions 15 and 65 each coordinate Mn(2+). Serine 65 acts as the Phosphoserine intermediate in catalysis. Substrate is bound by residues histidine 126, 156-157 (RD), arginine 188, arginine 194, 258-261 (RPDR), and lysine 331. 5 residues coordinate Mn(2+): aspartate 398, histidine 402, aspartate 439, histidine 440, and histidine 457.

Belongs to the BPG-independent phosphoglycerate mutase family. Monomer. Requires Mn(2+) as cofactor.

The catalysed reaction is (2R)-2-phosphoglycerate = (2R)-3-phosphoglycerate. It functions in the pathway carbohydrate degradation; glycolysis; pyruvate from D-glyceraldehyde 3-phosphate: step 3/5. Catalyzes the interconversion of 2-phosphoglycerate and 3-phosphoglycerate. This chain is 2,3-bisphosphoglycerate-independent phosphoglycerate mutase, found in Synechocystis sp. (strain ATCC 27184 / PCC 6803 / Kazusa).